The following is a 626-amino-acid chain: Deoxynucleoside triphosphate triphosphohydrolase SAMHD1 (626 aa).

Methionine 1 is subject to N-acetylmethionine. Residues 1 to 19 (MQRADSEQPSKRPRCDDSP) are compositionally biased toward basic and acidic residues. Positions 1–36 (MQRADSEQPSKRPRCDDSPRTPSNTPSAEADWSPGL) are disordered. Residue serine 18 is modified to Phosphoserine. Residues threonine 21 and threonine 25 each carry the phosphothreonine modification. 2 positions are modified to phosphoserine: serine 33 and serine 93. Positions 45 to 110 (WGPEQVCSFL…LSYIQRLVQI (66 aa)) constitute an SAM domain. Positions 116 and 117 each coordinate GTP. Asparagine 119 provides a ligand contact to dATP. Asparagine 119 serves as a coordination point for dCTP. Position 119 (asparagine 119) interacts with dGTP. A dTTP-binding site is contributed by asparagine 119. 3 residues coordinate GTP: aspartate 137, glutamine 142, and arginine 145. Glutamine 149 lines the dATP pocket. Glutamine 149 contributes to the dCTP binding site. Residues glutamine 149, leucine 150, valine 156, and arginine 164 each contribute to the dGTP site. Position 149 (glutamine 149) interacts with dTTP. Residues valine 156 and arginine 164 each contribute to the dATP site. Positions 156 and 164 each coordinate dCTP. DTTP is bound by residues valine 156 and arginine 164. The region spanning 164–316 (RFEHSLGVGY…GIDVDKWDYF (153 aa)) is the HD domain. 3 residues coordinate Mn(2+): histidine 167, histidine 206, and aspartate 207. Residues histidine 210 and histidine 215 each coordinate dATP. 2 residues coordinate dCTP: histidine 210 and histidine 215. DTTP contacts are provided by histidine 210 and histidine 215. Histidine 233 is a catalytic residue. Aspartate 311 serves as a coordination point for Mn(2+). Lysine 312, tyrosine 315, aspartate 319, arginine 333, arginine 352, lysine 354, asparagine 358, and arginine 366 together coordinate dATP. DCTP contacts are provided by lysine 312, tyrosine 315, aspartate 319, arginine 333, arginine 352, and lysine 354. Lysine 312, tyrosine 315, aspartate 319, arginine 333, arginine 352, lysine 354, asparagine 358, and arginine 366 together coordinate dGTP. DTTP-binding residues include lysine 312, tyrosine 315, aspartate 319, arginine 333, arginine 352, and lysine 354. DCTP contacts are provided by arginine 366 and arginine 372. Positions 374, 375, 376, and 377 each coordinate dGTP. DATP is bound by residues glutamine 375, histidine 376, and lysine 377. Residues glutamine 375, histidine 376, and lysine 377 each coordinate dCTP. Positions 375, 376, and 377 each coordinate dTTP. GTP-binding residues include arginine 451 and lysine 455. Residues lysine 467, lysine 469, and lysine 492 each participate in a glycyl lysine isopeptide (Lys-Gly) (interchain with G-Cter in SUMO2) cross-link. A GTP-binding site is contributed by lysine 523. Lysine 523 contributes to the dATP binding site. Residue lysine 523 coordinates dCTP. A dGTP-binding site is contributed by lysine 523. Lysine 523 contributes to the dTTP binding site. Threonine 592 is modified ((Microbial infection) Phosphothreonine). A Phosphothreonine; by CDK1 modification is found at threonine 592. A Glycyl lysine isopeptide (Lys-Gly) (interchain with G-Cter in SUMO2) cross-link involves residue lysine 622.

This sequence belongs to the SAMHD1 family. Homodimer; in absence of GTP and dNTP. Homotetramer; in GTP- and dNTP-bound form. Interacts with MRE11; leading to stimulate the exonuclease activity of MRE11. Interacts with RBBP8/CtIP. Interacts (via its C-terminus) with CD81. As to quaternary structure, (Microbial infection) Interacts with HIV-2 viral protein Vpx; promoting interaction with a E3 ubiquitin-protein ligase complex containing DCAF1, leading to subsequent ubiquitination and degradation of SAMHD1. Requires Mn(2+) as cofactor. Phosphorylation at Thr-592 by CDK1 acts as a switch to control deoxynucleoside triphosphate (dNTPase)-dependent and -independent functions. Phosphorylation at Thr-592 takes place in cycling cells: it reduces the stability of the homotetramer, impairing the dNTPase activity and subsequent ability to restrict infection by viruses. It also inhibits ability to suppress LINE-1 retrotransposon activity. In contrast, phosphorylation at Thr-592 promotes DNA end resection at stalled replication forks in response to DNA damage. Post-translationally, (Microbial infection) Phosphorylation at Thr-592 by Epstein-Barr virus kinase BGLF4 and human cytomegalovirus/HCMV UL97 leads to a reduced level of dCTPase and dTTPase activity and the loss of viral restriction. In terms of processing, (Microbial infection) Ubiquitinated following interaction with HIV-2 viral protein Vpx; Vpx promotes interaction and with a DCX (DDB1-CUL4-X-box) E3 ubiquitin ligase, leading to proteasomal degradation. As to expression, expressed in heart, skeletal muscle, spleen, liver, small intestine, placenta, lung and peripheral blood leukocytes. No expression is seen in brain and thymus.

It localises to the nucleus. It is found in the chromosome. The enzyme catalyses a 2'-deoxyribonucleoside 5'-triphosphate + H2O = a 2'-deoxyribonucleoside + triphosphate + H(+). It carries out the reaction dATP + H2O = 2'-deoxyadenosine + triphosphate + H(+). It catalyses the reaction dCTP + H2O = 2'-deoxycytidine + triphosphate + H(+). The catalysed reaction is dGTP + H2O = 2'-deoxyguanosine + triphosphate + H(+). The enzyme catalyses dTTP + H2O = thymidine + triphosphate + H(+). Allosterically activated and regulated via the combined actions of GTP and dNTPs (dATP, dGTP, dTTP and dCTP): Allosteric site 1 binds GTP, while allosteric site 2 binds dNTP. Allosteric activation promotes the formation of highly active homotetramers. Phosphorylation at Thr-592 impairs homotetramerization, thereby inhibiting dNTPase activity, leading to reduced ability to restrict infection by viruses. Protein that acts both as a host restriction factor involved in defense response to virus and as a regulator of DNA end resection at stalled replication forks. Has deoxynucleoside triphosphate (dNTPase) activity, which is required to restrict infection by viruses, such as HIV-1: dNTPase activity reduces cellular dNTP levels to levels too low for retroviral reverse transcription to occur, blocking early-stage virus replication in dendritic and other myeloid cells. Likewise, suppresses LINE-1 retrotransposon activity. Not able to restrict infection by HIV-2 virus; because restriction activity is counteracted by HIV-2 viral protein Vpx. In addition to virus restriction, dNTPase activity acts as a regulator of DNA precursor pools by regulating dNTP pools. Phosphorylation at Thr-592 acts as a switch to control dNTPase-dependent and -independent functions: it inhibits dNTPase activity and ability to restrict infection by viruses, while it promotes DNA end resection at stalled replication forks. Functions during S phase at stalled DNA replication forks to promote the resection of gapped or reversed forks: acts by stimulating the exonuclease activity of MRE11, activating the ATR-CHK1 pathway and allowing the forks to restart replication. Its ability to promote degradation of nascent DNA at stalled replication forks is required to prevent induction of type I interferons, thereby preventing chronic inflammation. Ability to promote DNA end resection at stalled replication forks is independent of dNTPase activity. Enhances immunoglobulin hypermutation in B-lymphocytes by promoting transversion mutation. This chain is Deoxynucleoside triphosphate triphosphohydrolase SAMHD1, found in Homo sapiens (Human).